We begin with the raw amino-acid sequence, 524 residues long: GMP synthase [glutamine-hydrolyzing] (524 aa).

Residues 8-206 (RILILDFGSQ…IYDICGCEAL (199 aa)) enclose the Glutamine amidotransferase type-1 domain. Residue Cys85 is the Nucleophile of the active site. Catalysis depends on residues His180 and Glu182. Residues 207–399 (WEPRHIIAKS…LGLPFELVYR (193 aa)) form the GMPS ATP-PPase domain. Position 234–240 (234–240 (SGGVDSS)) interacts with ATP.

As to quaternary structure, homodimer.

The catalysed reaction is XMP + L-glutamine + ATP + H2O = GMP + L-glutamate + AMP + diphosphate + 2 H(+). It participates in purine metabolism; GMP biosynthesis; GMP from XMP (L-Gln route): step 1/1. Its function is as follows. Catalyzes the synthesis of GMP from XMP. The protein is GMP synthase [glutamine-hydrolyzing] of Nitrosococcus oceani (strain ATCC 19707 / BCRC 17464 / JCM 30415 / NCIMB 11848 / C-107).